Consider the following 376-residue polypeptide: dTDP-4-amino-4,6-dideoxygalactose transaminase (376 aa).

Lysine 181 is modified (N6-(pyridoxal phosphate)lysine).

Belongs to the DegT/DnrJ/EryC1 family. In terms of assembly, homotetramer. Pyridoxal 5'-phosphate is required as a cofactor.

The enzyme catalyses dTDP-4-amino-4,6-dideoxy-alpha-D-galactose + 2-oxoglutarate = dTDP-4-dehydro-6-deoxy-alpha-D-glucose + L-glutamate. Its pathway is bacterial outer membrane biogenesis; enterobacterial common antigen biosynthesis. Its function is as follows. Catalyzes the synthesis of dTDP-4-amino-4,6-dideoxy-D-galactose (dTDP-Fuc4N) from dTDP-4-keto-6-deoxy-D-glucose (dTDP-D-Glc4O) and L-glutamate. This Escherichia coli (strain K12) protein is dTDP-4-amino-4,6-dideoxygalactose transaminase.